The chain runs to 837 residues: Periplasmic nitrate reductase (837 aa).

A signal peptide (tat-type signal) is located at residues 1-33 (MTTPKLDRRQVLKLEAAAMAALAGGIAMPAAAA). The 4Fe-4S Mo/W bis-MGD-type domain maps to 44 to 100 (LKWDKAACRFCGTGCSVMVATKENRVVATHGDTKSEVNRGLNCVKGYFLSKIMYGHD). [4Fe-4S] cluster contacts are provided by cysteine 51, cysteine 54, cysteine 58, and cysteine 86. Residues lysine 88, glutamine 155, asparagine 180, cysteine 184, 217-224 (WGSNMAEM), 248-252 (STFEH), 267-269 (QTD), methionine 378, glutamine 382, asparagine 488, 514-515 (SD), lysine 537, aspartate 564, and 724-733 (TGRVLEHWHS) contribute to the Mo-bis(molybdopterin guanine dinucleotide) site. Tryptophan 800 is a substrate binding site. Mo-bis(molybdopterin guanine dinucleotide) is bound by residues asparagine 808 and lysine 825.

Belongs to the prokaryotic molybdopterin-containing oxidoreductase family. NasA/NapA/NarB subfamily. Component of the periplasmic nitrate reductase NapAB complex composed of NapA and NapB. The cofactor is [4Fe-4S] cluster. Requires Mo-bis(molybdopterin guanine dinucleotide) as cofactor. Predicted to be exported by the Tat system. The position of the signal peptide cleavage has not been experimentally proven.

It localises to the periplasm. It catalyses the reaction 2 Fe(II)-[cytochrome] + nitrate + 2 H(+) = 2 Fe(III)-[cytochrome] + nitrite + H2O. Catalytic subunit of the periplasmic nitrate reductase complex NapAB. Receives electrons from NapB and catalyzes the reduction of nitrate to nitrite. This chain is Periplasmic nitrate reductase, found in Rhodopseudomonas palustris (strain BisB18).